We begin with the raw amino-acid sequence, 238 residues long: ATP synthase subunit a (238 aa).

Transmembrane regions (helical) follow at residues 18–38 (GTTMITTTIAMAIVVIITVIG), 76–96 (FIVLAYALLFYVFVANMMGIP), 117–137 (VLTLTMAVFIVVLTHIYGIMV), 173–193 (LFGNIYAKEILMLLLVSLGTT), and 208–230 (WQAFSIFIGSLQAYIFAMLAMVY).

Belongs to the ATPase A chain family. As to quaternary structure, F-type ATPases have 2 components, CF(1) - the catalytic core - and CF(0) - the membrane proton channel. CF(1) has five subunits: alpha(3), beta(3), gamma(1), delta(1), epsilon(1). CF(0) has three main subunits: a(1), b(2) and c(9-12). The alpha and beta chains form an alternating ring which encloses part of the gamma chain. CF(1) is attached to CF(0) by a central stalk formed by the gamma and epsilon chains, while a peripheral stalk is formed by the delta and b chains.

The protein resides in the cell membrane. Its function is as follows. Key component of the proton channel; it plays a direct role in the translocation of protons across the membrane. The sequence is that of ATP synthase subunit a from Shouchella clausii (strain KSM-K16) (Alkalihalobacillus clausii).